A 221-amino-acid chain; its full sequence is Putative transmembrane protein ORF25 (221 aa).

An N-terminal signal peptide occupies residues 1-23; the sequence is MTLAAKLIVLVYVALCFVNESTS. Residues N19 and N179 are each glycosylated (N-linked (GlcNAc...) asparagine; by host). The Extracellular portion of the chain corresponds to 24 to 191; the sequence is QDHSNIYHET…LAKARGVPMS (168 aa). Residues 192-212 form a helical membrane-spanning segment; it reads VSVISGICAIILVIFPIFITI. Topologically, residues 213–221 are cytoplasmic; that stretch reads ANLRRVYLH.

The protein localises to the host membrane. This chain is Putative transmembrane protein ORF25, found in Ostreid herpesvirus 1 (isolate France) (OsHV-1).